Here is a 386-residue protein sequence, read N- to C-terminus: 3-ketosteroid-9-alpha-monooxygenase, oxygenase component (386 aa).

Residues 26-128 (WHCLGVAKDY…TDVRSGLLFV (103 aa)) form the Rieske domain. Positions 67, 69, 86, and 89 each coordinate [2Fe-2S] cluster. Residues N175, H181, H186, and D304 each coordinate Fe cation.

In terms of assembly, homotrimer. The two-component system 3-ketosteroid-9-alpha-monooxygenase is composed of an oxygenase component KshA and a reductase component KshB. [2Fe-2S] cluster is required as a cofactor. Requires Fe cation as cofactor.

The enzyme catalyses androsta-1,4-diene-3,17-dione + 2 reduced [2Fe-2S]-[ferredoxin] + O2 + 2 H(+) = 9alpha-hydroxyandrosta-1,4-diene-3,17-dione + 2 oxidized [2Fe-2S]-[ferredoxin] + H2O. The catalysed reaction is androst-4-ene-3,17-dione + NADH + O2 + H(+) = 9alpha-hydroxy-androst-4-ene-3,17-dione + NAD(+) + H2O. It carries out the reaction 3-oxochol-4-en-22-oate + NADH + O2 + H(+) = 9alpha-hydroxy-3-oxochol-4-en-22-oate + NAD(+) + H2O. It catalyses the reaction 3-oxochola-1,4-dien-22-oate + NADH + O2 + H(+) = 9alpha-hydroxy-3-oxochola-1,4-dien-22-oate + NAD(+) + H2O. The enzyme catalyses 3-oxochol-4-en-22-oyl-CoA + NADH + O2 + H(+) = 9alpha-hydroxy-3-oxochol-4-en-22-oyl-CoA + NAD(+) + H2O. The catalysed reaction is 3-oxochola-1,4-dien-22-oyl-CoA + NADH + O2 + H(+) = 9alpha-hydroxy-3-oxochola-1,4-dien-22-oyl-CoA + NAD(+) + H2O. Its pathway is lipid metabolism; steroid biosynthesis. Involved in the degradation of cholesterol. Catalyzes the introduction of a 9a-hydroxyl moiety into 1,4-androstadiene-3,17-dione (ADD) to yield the 9alpha-hydroxy-1,4-androstadiene-3,17-dione (9OHADD) intermediate which spontaneously form 3-hydroxy-9,10-seconandrost-1,3,5(10)-triene-9,17-dione (HSA) via the meta-cleavage of ring B with concomitant aromatization of ring A. KSH is also able to use 4-androstene-3,17-dione (AD), 3-oxo-23,24-bisnorcholesta-4-en-22-oate (4-BNC), 3-oxo-23,24-bisnorcholesta-1,4-dien-22-oate (1,4-BNC), 3-oxo-23,24-bisnorcholesta-4-en-22-oyl-coenzyme A thioester (4-BNC-CoA) and 3-oxo-23,24-bisnorcholesta-1,4-dien-22-oyl-coenzyme A thioester (1,4-BNC-CoA) as substrates. This Mycobacterium tuberculosis (strain ATCC 25618 / H37Rv) protein is 3-ketosteroid-9-alpha-monooxygenase, oxygenase component (kshA).